We begin with the raw amino-acid sequence, 188 residues long: dCTP deaminase (188 aa).

Residues 111–116, 135–137, Gln156, Tyr170, and Gln180 each bind dCTP; these read KSTYAR and TLE. The active-site Proton donor/acceptor is the Glu137.

The protein belongs to the dCTP deaminase family. Homotrimer.

It carries out the reaction dCTP + H2O + H(+) = dUTP + NH4(+). It functions in the pathway pyrimidine metabolism; dUMP biosynthesis; dUMP from dCTP (dUTP route): step 1/2. Catalyzes the deamination of dCTP to dUTP. The sequence is that of dCTP deaminase from Marinobacter nauticus (strain ATCC 700491 / DSM 11845 / VT8) (Marinobacter aquaeolei).